The chain runs to 251 residues: Low molecular mass lipoprotein PBMHPC-21 (251 aa).

A signal peptide spans 1–16 (MKFVVVFASCVLAVSA).

The protein belongs to the 30 kDa lipoprotein family.

It localises to the secreted. The polypeptide is Low molecular mass lipoprotein PBMHPC-21 (Bombyx mori (Silk moth)).